The following is a 732-amino-acid chain: X-ray repair cross-complementing protein 5 (732 aa).

The region spanning 9–161 (AVVLCVDVGV…CNLKKSGISL (153 aa)) is the VWFA domain. The leucine-zipper stretch occupies residues 138 to 165 (LSSPFSQDQLDVIICNLKKSGISLQFFL). Lys-195 is covalently cross-linked (Glycyl lysine isopeptide (Lys-Gly) (interchain with G-Cter in SUMO2)). One can recognise a Ku domain in the interval 253–453 (IGPNLSIKIV…CTPTEAQLSA (201 aa)). Ser-258 is subject to Phosphoserine. Lys-265 carries the post-translational modification N6-acetyllysine. Ser-318 is modified (phosphoserine). An N6-acetyllysine modification is found at Lys-332. Residues Lys-532 and Lys-534 each participate in a glycyl lysine isopeptide (Lys-Gly) (interchain with G-Cter in SUMO2) cross-link. Thr-535 carries the phosphothreonine modification. Glycyl lysine isopeptide (Lys-Gly) (interchain with G-Cter in SUMO2) cross-links involve residues Lys-567 and Lys-569. A phosphoserine; by PRKDC mark is found at Ser-578, Ser-580, and Ser-581. Lys-666 carries the post-translational modification N6-acetyllysine. Glycyl lysine isopeptide (Lys-Gly) (interchain with G-Cter in SUMO2) cross-links involve residues Lys-670 and Lys-689. The tract at residues 708-732 (PKDKAKEDTTGPEEAGDVDDLLDMI) is disordered. Position 716 is a phosphothreonine; by PRKDC (Thr-716). Residues 717–732 (TGPEEAGDVDDLLDMI) are compositionally biased toward acidic residues. An EEXXXDL motif motif is present at residues 720 to 728 (EEAGDVDDL).

The protein belongs to the ku80 family. Heterodimer composed of XRCC5/Ku80 and XRCC6/Ku70. Component of the core long-range non-homologous end joining (NHEJ) complex (also named DNA-PK complex) composed of PRKDC, LIG4, XRCC4, XRCC6/Ku70, XRCC5/Ku86 and NHEJ1/XLF. Additional component of the NHEJ complex includes PAXX. Following autophosphorylation, PRKDC dissociates from DNA, leading to formation of the short-range NHEJ complex, composed of LIG4, XRCC4, XRCC6/Ku70, XRCC5/Ku86 and NHEJ1/XLF. The XRCC5-XRCC6 dimer also associates with NAA15, and this complex displays DNA binding activity towards the osteocalcin FGF response element (OCFRE). In addition, XRCC5 binds to the osteoblast-specific transcription factors MSX2 and RUNX2. Interacts with ELF3. Interacts with APLF (via KBM motif). The XRCC5/XRCC6 dimer associates in a DNA-dependent manner with APEX1. Identified in a complex with DEAF1 and XRCC6. Interacts with NR4A3; the DNA-dependent protein kinase complex DNA-PK phosphorylates and activates NR4A3 and prevents NR4A3 ubiquitinylation and degradation. Interacts with RNF138. Interacts with CYREN (via KBM motif). Interacts with WRN (via KBM motif). Interacts (via N-terminus) with HSF1 (via N-terminus); this interaction is direct and prevents XRCC5/XRCC6 heterodimeric binding and non-homologous end joining (NHEJ) repair activities induced by ionizing radiation (IR). Interacts with DHX9; this interaction occurs in a RNA-dependent manner. Part of the HDP-RNP complex composed of at least HEXIM1, PRKDC, XRCC5, XRCC6, paraspeckle proteins (SFPQ, NONO, PSPC1, RBM14, and MATR3) and NEAT1 RNA. Interacts with ERCC6. Interacts with ATF7. The XRCC5-XRCC6 dimer associates with ALKBH2. Interacts with TPRN; TPRN interacts with a number of DNA damage response proteins, is recruited to sites of DNA damage and may play a role in DNA damage repair. Interacts with ERCC6L2. In terms of processing, ADP-ribosylated by PARP3. Phosphorylated on serine residues. Phosphorylation by PRKDC may enhance helicase activity. Post-translationally, sumoylated. In terms of processing, ubiquitinated by RNF8 via 'Lys-48'-linked ubiquitination following DNA damage, leading to its degradation and removal from DNA damage sites. Ubiquitinated by RNF138, leading to remove the Ku complex from DNA breaks.

It localises to the nucleus. It is found in the nucleolus. The protein resides in the chromosome. In terms of biological role, single-stranded DNA-dependent ATP-dependent helicase that plays a key role in DNA non-homologous end joining (NHEJ) by recruiting DNA-PK to DNA. Required for double-strand break repair and V(D)J recombination. Also has a role in chromosome translocation. The DNA helicase II complex binds preferentially to fork-like ends of double-stranded DNA in a cell cycle-dependent manner. It works in the 3'-5' direction. During NHEJ, the XRCC5-XRRC6 dimer performs the recognition step: it recognizes and binds to the broken ends of the DNA and protects them from further resection. Binding to DNA may be mediated by XRCC6. The XRCC5-XRRC6 dimer acts as a regulatory subunit of the DNA-dependent protein kinase complex DNA-PK by increasing the affinity of the catalytic subunit PRKDC to DNA by 100-fold. The XRCC5-XRRC6 dimer is probably involved in stabilizing broken DNA ends and bringing them together. The assembly of the DNA-PK complex to DNA ends is required for the NHEJ ligation step. The XRCC5-XRRC6 dimer probably also acts as a 5'-deoxyribose-5-phosphate lyase (5'-dRP lyase), by catalyzing the beta-elimination of the 5' deoxyribose-5-phosphate at an abasic site near double-strand breaks. XRCC5 probably acts as the catalytic subunit of 5'-dRP activity, and allows to 'clean' the termini of abasic sites, a class of nucleotide damage commonly associated with strand breaks, before such broken ends can be joined. The XRCC5-XRRC6 dimer together with APEX1 acts as a negative regulator of transcription. In association with NAA15, the XRCC5-XRRC6 dimer binds to the osteocalcin promoter and activates osteocalcin expression. As part of the DNA-PK complex, involved in the early steps of ribosome assembly by promoting the processing of precursor rRNA into mature 18S rRNA in the small-subunit processome. Binding to U3 small nucleolar RNA, recruits PRKDC and XRCC5/Ku86 to the small-subunit processome. Plays a role in the regulation of DNA virus-mediated innate immune response by assembling into the HDP-RNP complex, a complex that serves as a platform for IRF3 phosphorylation and subsequent innate immune response activation through the cGAS-STING pathway. The polypeptide is X-ray repair cross-complementing protein 5 (Xrcc5) (Mus musculus (Mouse)).